Here is a 642-residue protein sequence, read N- to C-terminus: Threonine--tRNA ligase (642 aa).

Positions 1 to 58 (MQVAGKELEVQQGALCGEVLKEALSKKQFKNVVVAKCGDTLLDLTTTVPADCTDLEPV) constitute a TGS domain. The catalytic stretch occupies residues 239 to 530 (DHRKLGTQLD…LLEHTGGALP (292 aa)). Positions 331, 382, and 507 each coordinate Zn(2+).

The protein belongs to the class-II aminoacyl-tRNA synthetase family. Homodimer. It depends on Zn(2+) as a cofactor.

It localises to the cytoplasm. It catalyses the reaction tRNA(Thr) + L-threonine + ATP = L-threonyl-tRNA(Thr) + AMP + diphosphate + H(+). Its function is as follows. Catalyzes the attachment of threonine to tRNA(Thr) in a two-step reaction: L-threonine is first activated by ATP to form Thr-AMP and then transferred to the acceptor end of tRNA(Thr). Also edits incorrectly charged L-seryl-tRNA(Thr). The polypeptide is Threonine--tRNA ligase (Maridesulfovibrio salexigens (strain ATCC 14822 / DSM 2638 / NCIMB 8403 / VKM B-1763) (Desulfovibrio salexigens)).